A 371-amino-acid chain; its full sequence is Chaperone protein DnaJ (371 aa).

A J domain is found at 5–69; that stretch reads DYYEVLGLSK…QKRAQYDQFG (65 aa). Residues 133–215 form a CR-type zinc finger; that stretch reads GKELNVEIPV…CHGSGKVRKR (83 aa). Cys-146, Cys-149, Cys-163, Cys-166, Cys-189, Cys-192, Cys-203, and Cys-206 together coordinate Zn(2+). CXXCXGXG motif repeat units follow at residues 146–153, 163–170, 189–196, and 203–210; these read CDTCKGSG, CKHCSGSG, CSHCSGTG, and CTTCHGSG.

The protein belongs to the DnaJ family. Homodimer. Zn(2+) is required as a cofactor.

The protein localises to the cytoplasm. Functionally, participates actively in the response to hyperosmotic and heat shock by preventing the aggregation of stress-denatured proteins and by disaggregating proteins, also in an autonomous, DnaK-independent fashion. Unfolded proteins bind initially to DnaJ; upon interaction with the DnaJ-bound protein, DnaK hydrolyzes its bound ATP, resulting in the formation of a stable complex. GrpE releases ADP from DnaK; ATP binding to DnaK triggers the release of the substrate protein, thus completing the reaction cycle. Several rounds of ATP-dependent interactions between DnaJ, DnaK and GrpE are required for fully efficient folding. Also involved, together with DnaK and GrpE, in the DNA replication of plasmids through activation of initiation proteins. This chain is Chaperone protein DnaJ, found in Bacillus cereus (strain AH820).